Reading from the N-terminus, the 309-residue chain is Porphobilinogen deaminase (309 aa).

S-(dipyrrolylmethanemethyl)cysteine is present on cysteine 240.

Belongs to the HMBS family. As to quaternary structure, monomer. The cofactor is dipyrromethane.

It carries out the reaction 4 porphobilinogen + H2O = hydroxymethylbilane + 4 NH4(+). Its pathway is porphyrin-containing compound metabolism; protoporphyrin-IX biosynthesis; coproporphyrinogen-III from 5-aminolevulinate: step 2/4. Tetrapolymerization of the monopyrrole PBG into the hydroxymethylbilane pre-uroporphyrinogen in several discrete steps. The protein is Porphobilinogen deaminase of Chromobacterium violaceum (strain ATCC 12472 / DSM 30191 / JCM 1249 / CCUG 213 / NBRC 12614 / NCIMB 9131 / NCTC 9757 / MK).